The chain runs to 387 residues: 3-ketoacyl-CoA thiolase (387 aa).

Cysteine 91 serves as the catalytic Acyl-thioester intermediate. Residues histidine 343 and cysteine 373 each act as proton acceptor in the active site.

Belongs to the thiolase-like superfamily. Thiolase family. As to quaternary structure, heterotetramer of two alpha chains (FadB) and two beta chains (FadA).

Its subcellular location is the cytoplasm. It catalyses the reaction an acyl-CoA + acetyl-CoA = a 3-oxoacyl-CoA + CoA. It functions in the pathway lipid metabolism; fatty acid beta-oxidation. Functionally, catalyzes the final step of fatty acid oxidation in which acetyl-CoA is released and the CoA ester of a fatty acid two carbons shorter is formed. The chain is 3-ketoacyl-CoA thiolase from Shewanella baltica (strain OS185).